The sequence spans 157 residues: Short-type peptidyl-prolyl cis-trans isomerase (157 aa).

The PPIase FKBP-type domain maps to 1–95 (MINLIKKGDY…RDERLIQEIP (95 aa)). The tract at residues 86–137 (RDERLIQEIPKEMFADADFEPQEGMLILASGIPAKIIKVTDDTVTLDFNHEL) is IF.

The protein belongs to the FKBP-type PPIase family.

The protein localises to the cytoplasm. It carries out the reaction [protein]-peptidylproline (omega=180) = [protein]-peptidylproline (omega=0). Its function is as follows. Catalyzes the cis-trans isomerization of peptidyl prolyl bonds and accelerates protein folding. Also exhibits chaperone-like activity. The protein is Short-type peptidyl-prolyl cis-trans isomerase of Methanocaldococcus jannaschii (strain ATCC 43067 / DSM 2661 / JAL-1 / JCM 10045 / NBRC 100440) (Methanococcus jannaschii).